A 154-amino-acid chain; its full sequence is Myoglobin (154 aa).

The 147-residue stretch at 2 to 148 (GLSDQEWQQV…FRNDMASKYK (147 aa)) folds into the Globin domain. Nitrite is bound at residue histidine 65. An O2-binding site is contributed by histidine 65. Histidine 94 contacts heme b.

In terms of assembly, monomeric.

Its subcellular location is the cytoplasm. It is found in the sarcoplasm. The catalysed reaction is Fe(III)-heme b-[protein] + nitric oxide + H2O = Fe(II)-heme b-[protein] + nitrite + 2 H(+). It catalyses the reaction H2O2 + AH2 = A + 2 H2O. Functionally, monomeric heme protein which primary function is to store oxygen and facilitate its diffusion within muscle tissues. Reversibly binds oxygen through a pentacoordinated heme iron and enables its timely and efficient release as needed during periods of heightened demand. Depending on the oxidative conditions of tissues and cells, and in addition to its ability to bind oxygen, it also has a nitrite reductase activity whereby it regulates the production of bioactive nitric oxide. Under stress conditions, like hypoxia and anoxia, it also protects cells against reactive oxygen species thanks to its pseudoperoxidase activity. In Struthio camelus (Common ostrich), this protein is Myoglobin (MB).